The following is a 475-amino-acid chain: Ras-GEF domain-containing family member 1B-B (475 aa).

The segment covering 1–19 (MPQTTPYSSKFNPSAYSSS) has biased composition (polar residues). The disordered stretch occupies residues 1 to 25 (MPQTTPYSSKFNPSAYSSSHSHRQP). In terms of domain architecture, N-terminal Ras-GEF spans 36–166 (RDNKLVSGSL…LIQRLLRKLT (131 aa)). Residues 209 to 456 (DPFIFAQQLT…QLASYESEGP (248 aa)) enclose the Ras-GEF domain. A disordered region spans residues 452–475 (ESEGPENNLERDTRRSLRSSLSRM).

In terms of biological role, guanine nucleotide exchange factor (GEF) for Ras family proteins. The polypeptide is Ras-GEF domain-containing family member 1B-B (Danio rerio (Zebrafish)).